A 492-amino-acid polypeptide reads, in one-letter code: WD repeat-containing protein JIP5 (492 aa).

WD repeat units lie at residues 127–166 (RHKG…VVKK), 178–217 (KKND…LSNS), 236–274 (RSAY…ILIS), 276–317 (DQED…LEDQ), and 365–405 (RNHN…VEEN). Acidic residues-rich tracts occupy residues 404 to 414 (ENASVESDSDE) and 422 to 433 (DLSDDTSSDDET). Residues 404–472 (ENASVESDSD…SKSVKKRKIM (69 aa)) form a disordered region. Positions 449–462 (KDLKEDHQEEKESN) are enriched in basic and acidic residues.

The protein belongs to the WD repeat WDR55 family. Interacts with BRE1, BUD27 and GIS1.

It localises to the nucleus. It is found in the nucleolus. This Saccharomyces cerevisiae (strain YJM789) (Baker's yeast) protein is WD repeat-containing protein JIP5 (JIP5).